Here is a 2128-residue protein sequence, read N- to C-terminus: Non-reducing polyketide synthase albA (2128 aa).

Positions 8–244 (YLFGDQTSDI…VKAPIHGPYH (237 aa)) are N-terminal acylcarrier protein transacylase domain (SAT). The Ketosynthase family 3 (KS3) domain occupies 375 to 806 (NSKIAIIGMS…GGNTALLLED (432 aa)). Active-site for beta-ketoacyl synthase activity residues include C547, H682, and H724. Residues 912–1232 (FVFTGQGAQY…LASLHLAGID (321 aa)) are malonyl-CoA:ACP transacylase (MAT) domain. Residue S1001 is the For acyl/malonyl transferase activity of the active site. Residues 1286-1425 (HEYLTTAAQK…CTVRFFDCAA (140 aa)) form an N-terminal hotdog fold region. The PKS/mFAS DH domain occupies 1286 to 1598 (HEYLTTAAQK…FQALSRKILD (313 aa)). Residues 1290 to 1603 (TTAAQKVIET…RKILDTVLPP (314 aa)) form a product template (PT) domain region. Residue H1326 is the Proton acceptor; for dehydratase activity of the active site. Residues 1452 to 1598 (DAHRLGRGMV…FQALSRKILD (147 aa)) are C-terminal hotdog fold. D1511 functions as the Proton donor; for dehydratase activity in the catalytic mechanism. Residues 1618–1695 (PSAPSLVKRA…DFKQFLAPMS (78 aa)) form the Carrier 1 domain. An O-(pantetheine 4'-phosphoryl)serine modification is found at S1655. The disordered stretch occupies residues 1695–1740 (SQGEASDGSTSDPESSSSFNGGSSTDESSAGSPVSSPPNEKVTQVE). Residues 1700-1723 (SDGSTSDPESSSSFNGGSSTDESS) show a composition bias toward low complexity. Residues 1724–1740 (AGSPVSSPPNEKVTQVE) are compositionally biased toward polar residues. The Carrier 2 domain occupies 1739–1816 (VEQHATIKEI…DVEDALGLKP (78 aa)). Residue S1776 is modified to O-(pantetheine 4'-phosphoryl)serine. The claisen cyclase domain stretch occupies residues 1854-2126 (SPHPRSTSIL…ELGSFIGNAM (273 aa)). The For Claisen cyclase activity role is filled by S1944.

It carries out the reaction 6 malonyl-CoA + acetyl-CoA + 6 H(+) = naphtopyrone YWA1 + 6 CO2 + 7 CoA + H2O. The protein operates within secondary metabolite biosynthesis. Functionally, non-reducing polyketide synthase; part of the gene cluster that mediates the biosynthesis of aurasperone B, a dimeric gamma-naphthopyrone. The first step in the biosynthesis of aurasperone B is the production of gamma-naphthopyrone precursor YWA1 by the non-reducing polyketide synthase albA, via condensation of one acetyl-CoA starter unit with 6 malonyl-CoA units. YWA1 is then methylated by aunE at position C-6 to yield foncesin which is further methylated at position C-8 by aunD to produce fonsecin B. A key enzyme in the biosynthetic pathway is the cytochrome P450 monooxygenase aunB which catalyzes the oxidative dimerization of fonsecin B to aurasperone B. AunB also catalyzes the oxidative dimerization of rubrofusarin B into aurasperone A. The polypeptide is Non-reducing polyketide synthase albA (Aspergillus niger (strain ATCC 1015 / CBS 113.46 / FGSC A1144 / LSHB Ac4 / NCTC 3858a / NRRL 328 / USDA 3528.7)).